The chain runs to 470 residues: Argininosuccinate lyase (470 aa).

Belongs to the lyase 1 family. Argininosuccinate lyase subfamily.

It is found in the cytoplasm. It catalyses the reaction 2-(N(omega)-L-arginino)succinate = fumarate + L-arginine. The protein operates within amino-acid biosynthesis; L-arginine biosynthesis; L-arginine from L-ornithine and carbamoyl phosphate: step 3/3. This Synechococcus sp. (strain WH7803) protein is Argininosuccinate lyase.